The following is an 882-amino-acid chain: Bifunctional heparan sulfate N-deacetylase/N-sulfotransferase 1 (882 aa).

Over 1 to 17 (MPALACLRRLCRHLSPQ) the chain is Cytoplasmic. The tract at residues 1–169 (MPALACLRRL…VAYGVGIIGF (169 aa)) is sufficient for localization to Golgi membrane. Residues 18-38 (AVLFLLFVFCLFSVFVSAYYL) traverse the membrane as a helical; Signal-anchor for type II membrane protein segment. The Lumenal segment spans residues 39–882 (YGWNRGLEPS…WLREDLQNTR (844 aa)). The heparan sulfate N-deacetylase 1 stretch occupies residues 40–598 (GWNRGLEPSA…KRHKDIWSKE (559 aa)). 3 N-linked (GlcNAc...) asparagine glycosylation sites follow: Asn-231, Asn-351, and Asn-401. The heparan sulfate N-sulfotransferase 1 stretch occupies residues 599-882 (KTCDRFPKLL…WLREDLQNTR (284 aa)). Catalysis depends on Lys-614, which acts as the For sulfotransferase activity. 614 to 618 (KTGTT) contributes to the adenosine 3',5'-bisphosphate binding site. The N-linked (GlcNAc...) asparagine glycan is linked to Asn-667. The adenosine 3',5'-bisphosphate site is built by Ser-712 and Trp-817. Cys-818 and Cys-828 are disulfide-bonded. 833-837 (KGRKY) lines the adenosine 3',5'-bisphosphate pocket.

It belongs to the sulfotransferase 1 family. NDST subfamily. In terms of assembly, monomer. Interacts with heparan sulfate co-polymerase subunits EXT1 and EXT2. Widely expressed in adult and throughout development.

It localises to the golgi apparatus membrane. It is found in the golgi apparatus. The protein resides in the trans-Golgi network membrane. The protein localises to the cis-Golgi network membrane. The catalysed reaction is N-acetyl-alpha-D-glucosaminyl-[heparan sulfate](n) + H2O = alpha-D-glucosaminyl-[heparan sulfate](n) + acetate. It carries out the reaction alpha-D-glucosaminyl-[heparan sulfate](n) + 3'-phosphoadenylyl sulfate = N-sulfo-alpha-D-glucosaminyl-[heparan sulfate](n) + adenosine 3',5'-bisphosphate + 2 H(+). The protein operates within glycan metabolism; heparan sulfate biosynthesis. It participates in glycan metabolism; heparin biosynthesis. Its activity is regulated as follows. Inhibited by long N-sulfated sequences (more than 6 sugar residues) accumulating in its substrates heparan sulfate, and heparin. Essential bifunctional enzyme that catalyzes both the N-deacetylation and the N-sulfation of glucosamine (GlcNAc) of the glycosaminoglycan in heparan sulfate. Modifies the GlcNAc-GlcA disaccharide repeating sugar backbone to make N-sulfated heparosan, a prerequisite substrate for later modifications in heparin biosynthesis. Plays a role in determining the extent and pattern of sulfation of heparan sulfate. Participates in biosynthesis of heparan sulfate that can ultimately serve as L-selectin ligands, thereby playing a role in inflammatory response. Required for the exosomal release of SDCBP, CD63 and syndecan. This is Bifunctional heparan sulfate N-deacetylase/N-sulfotransferase 1 from Mus musculus (Mouse).